Reading from the N-terminus, the 124-residue chain is Large ribosomal subunit protein bL12 (124 aa).

It belongs to the bacterial ribosomal protein bL12 family. In terms of assembly, homodimer. Part of the ribosomal stalk of the 50S ribosomal subunit. Forms a multimeric L10(L12)X complex, where L10 forms an elongated spine to which 2 to 4 L12 dimers bind in a sequential fashion. Binds GTP-bound translation factors.

Forms part of the ribosomal stalk which helps the ribosome interact with GTP-bound translation factors. Is thus essential for accurate translation. The polypeptide is Large ribosomal subunit protein bL12 (Vesicomyosocius okutanii subsp. Calyptogena okutanii (strain HA)).